The following is a 227-amino-acid chain: Cytochrome c oxidase subunit 2 (227 aa).

Residues 1-14 lie on the Mitochondrial intermembrane side of the membrane; the sequence is MAYPFQLGLQDATS. The helical transmembrane segment at 15–45 threads the bilayer; sequence PIMEELMNFHDHTLMIVFLISSLVLYIISLM. At 46-59 the chain is on the mitochondrial matrix side; the sequence is LTTKLTHTSTMDAQ. A helical transmembrane segment spans residues 60-87; sequence EVETIWTILPAAILILIALPSLRILYMM. Topologically, residues 88–227 are mitochondrial intermembrane; it reads DEINNPVLTV…YFENWSASMI (140 aa). Positions 161, 196, 198, 200, 204, and 207 each coordinate Cu cation. Glu198 is a binding site for Mg(2+). Residue Tyr218 is modified to Phosphotyrosine.

The protein belongs to the cytochrome c oxidase subunit 2 family. As to quaternary structure, component of the cytochrome c oxidase (complex IV, CIV), a multisubunit enzyme composed of 14 subunits. The complex is composed of a catalytic core of 3 subunits MT-CO1, MT-CO2 and MT-CO3, encoded in the mitochondrial DNA, and 11 supernumerary subunits COX4I, COX5A, COX5B, COX6A, COX6B, COX6C, COX7A, COX7B, COX7C, COX8 and NDUFA4, which are encoded in the nuclear genome. The complex exists as a monomer or a dimer and forms supercomplexes (SCs) in the inner mitochondrial membrane with NADH-ubiquinone oxidoreductase (complex I, CI) and ubiquinol-cytochrome c oxidoreductase (cytochrome b-c1 complex, complex III, CIII), resulting in different assemblies (supercomplex SCI(1)III(2)IV(1) and megacomplex MCI(2)III(2)IV(2)). Found in a complex with TMEM177, COA6, COX18, COX20, SCO1 and SCO2. Interacts with TMEM177 in a COX20-dependent manner. Interacts with COX20. Interacts with COX16. Requires Cu cation as cofactor.

It localises to the mitochondrion inner membrane. The catalysed reaction is 4 Fe(II)-[cytochrome c] + O2 + 8 H(+)(in) = 4 Fe(III)-[cytochrome c] + 2 H2O + 4 H(+)(out). Component of the cytochrome c oxidase, the last enzyme in the mitochondrial electron transport chain which drives oxidative phosphorylation. The respiratory chain contains 3 multisubunit complexes succinate dehydrogenase (complex II, CII), ubiquinol-cytochrome c oxidoreductase (cytochrome b-c1 complex, complex III, CIII) and cytochrome c oxidase (complex IV, CIV), that cooperate to transfer electrons derived from NADH and succinate to molecular oxygen, creating an electrochemical gradient over the inner membrane that drives transmembrane transport and the ATP synthase. Cytochrome c oxidase is the component of the respiratory chain that catalyzes the reduction of oxygen to water. Electrons originating from reduced cytochrome c in the intermembrane space (IMS) are transferred via the dinuclear copper A center (CU(A)) of subunit 2 and heme A of subunit 1 to the active site in subunit 1, a binuclear center (BNC) formed by heme A3 and copper B (CU(B)). The BNC reduces molecular oxygen to 2 water molecules using 4 electrons from cytochrome c in the IMS and 4 protons from the mitochondrial matrix. In Praomys tullbergi (Tullberg's soft-furred rat), this protein is Cytochrome c oxidase subunit 2 (MT-CO2).